A 307-amino-acid polypeptide reads, in one-letter code: Actin maturation protease (307 aa).

The segment at 1–34 (MSLENDAAAPPPPPLPPPPPPQPPSLARSESSKK) is disordered. The segment covering 9–24 (APPPPPLPPPPPPQPP) has biased composition (pro residues). A peptidase C39-like region spans residues 80 to 200 (SLIQDGPQCG…WAVASGILLG (121 aa)). Cysteine 88 is an active-site residue.

This sequence belongs to the ACTMAP family.

The protein resides in the cytoplasm. The enzyme catalyses N-terminal N(alpha)-acetyl-L-methionyl-L-aspartyl-[protein] + H2O = N-terminal L-aspartyl-[protein] + N-acetyl-L-methionine. It catalyses the reaction N-terminal N(alpha)-acetyl-L-methionyl-L-glutamyl-[protein] + H2O = N-terminal L-glutamyl-[protein] + N-acetyl-L-methionine. It carries out the reaction N-terminal N(alpha)-acetyl-L-cysteinyl-L-aspartyl-[protein] + H2O = N-terminal L-aspartyl-[protein] + N-acetyl-L-cysteine. The catalysed reaction is N-terminal N(alpha)-acetyl-L-cysteinyl-L-glutamyl-[protein] + H2O = N-terminal L-glutamyl-[protein] + N-acetyl-L-cysteine. Actin maturation protease that specifically mediates the cleavage of immature acetylated N-terminal actin, thereby contributing to actin maturation. Cleaves N-terminal acetylated methionine of immature cytoplasmic actin after translation. Cleaves N-terminal acetylated cysteine of muscle actin after canonical removal of N-terminal methionine. This chain is Actin maturation protease, found in Danio rerio (Zebrafish).